The primary structure comprises 152 residues: Transcriptional repressor NrdR (152 aa).

The segment at cysteine 3–cysteine 34 is a zinc-finger region. Residues proline 49 to alanine 139 form the ATP-cone domain.

The protein belongs to the NrdR family. The cofactor is Zn(2+).

Functionally, negatively regulates transcription of bacterial ribonucleotide reductase nrd genes and operons by binding to NrdR-boxes. This chain is Transcriptional repressor NrdR, found in Acinetobacter baumannii (strain AB0057).